The chain runs to 209 residues: Large ribosomal subunit protein uL3 (209 aa).

The disordered stretch occupies residues 128-163 (FGGGSRTHGQSDRLRAPGSVGGSSDPSRTFRGTRMA).

It belongs to the universal ribosomal protein uL3 family. As to quaternary structure, part of the 50S ribosomal subunit. Forms a cluster with proteins L14 and L19.

One of the primary rRNA binding proteins, it binds directly near the 3'-end of the 23S rRNA, where it nucleates assembly of the 50S subunit. The polypeptide is Large ribosomal subunit protein uL3 (Chlorobium phaeobacteroides (strain DSM 266 / SMG 266 / 2430)).